The sequence spans 529 residues: 3-ketoacyl-CoA synthase 20 (529 aa).

The tract at residues 1-22 is disordered; that stretch reads MSHNQNQPHRPVPVHVTNAEPN. Transmembrane regions (helical) follow at residues 52-72 and 84-104; these read LYIL…SFTI and FHFL…TAYF. In terms of domain architecture, FAE spans 103 to 396; that stretch reads YFTTRPRRVF…FFATLVARKV (294 aa). Residues C247, H326, H415, H419, and N452 contribute to the active site.

It belongs to the thiolase-like superfamily. Chalcone/stilbene synthases family. As to expression, expressed in aerial organs. Expressed in leaves, flowers, siliques and stems. Expressed in roots, young seedlings, leaves, flowers and siliques.

It localises to the membrane. It catalyses the reaction a very-long-chain acyl-CoA + malonyl-CoA + H(+) = a very-long-chain 3-oxoacyl-CoA + CO2 + CoA. It functions in the pathway lipid metabolism; fatty acid biosynthesis. With respect to regulation, inhibited by K3 herbicides such as alachlor, allidochlor, anilofos, cafenstrole, fentrazamide and flufenacet. Strongly inhibited by metazachlor and only slightly by mefluidide. Mediates the synthesis of VLCFAs from 22 to 26 carbons in length (e.g. C22, C24, C26). Functionally redundant with KCS2 in the two-carbon elongation of C22 fatty acids that is required for cuticular wax and root suberin biosynthesis. In Arabidopsis thaliana (Mouse-ear cress), this protein is 3-ketoacyl-CoA synthase 20.